We begin with the raw amino-acid sequence, 266 residues long: Energy-coupling factor transporter ATP-binding protein EcfA2 (266 aa).

In terms of domain architecture, ABC transporter spans 3–238; sequence IEVVNVSHIF…YDPRFFTSKM (236 aa). Residue 43–48 participates in ATP binding; it reads GSGKST. Glu164 acts as the Proton acceptor in catalysis. Residues 220-266 form a required for heterodimer formation region; it reads GTRMEFLEKYDPRFFTSKMLVMRRLVLKGEDPFSMSDDELLERVCNS.

This sequence belongs to the ABC transporter superfamily. Energy-coupling factor EcfA family. Forms a heterodimer with EcfA1. Forms a stable energy-coupling factor (ECF) transporter complex composed of 2 membrane-embedded substrate-binding proteins (S component, RibU, BioY), 2 ATP-binding proteins (A component) and 2 transmembrane proteins (T component) upon coexpression in E.coli. Stable subcomplexes with both A plus T components can also be isolated. This complex interacts with at least 2 substrate-specific components, BioY and RibU.

It localises to the cell inner membrane. Functionally, ATP-binding (A) component of a common energy-coupling factor (ECF) ABC-transporter complex. Unlike classic ABC transporters this ECF transporter provides the energy necessary to transport a number of different substrates. Expression of the complex plus RibU in E.coli allows riboflavin uptake; uptake does not occur in the absence of RibU or the EcfA1A2T complex. This chain is Energy-coupling factor transporter ATP-binding protein EcfA2 (ecfA2), found in Thermotoga maritima (strain ATCC 43589 / DSM 3109 / JCM 10099 / NBRC 100826 / MSB8).